The sequence spans 524 residues: Serine/threonine-protein kinase PAK 2 (524 aa).

The interval 1–81 is disordered; the sequence is MSDNGELEDK…PEISPPSDFE (81 aa). S2 is subject to N-acetylserine. S2, S20, S55, S58, and S59 each carry phosphoserine. Residue T60 is modified to Phosphothreonine. K62 carries the post-translational modification N6-acetyllysine. At S64 the chain carries Phosphoserine. Residues 67–81 show a composition bias toward basic and acidic residues; that stretch reads KEKERPEISPPSDFE. The segment at 69–112 is GTPase-binding; the sequence is KERPEISPPSDFEHTIHVGFDAVTGEFTGMPEQWARLLQTSNIT. The autoregulatory region stretch occupies residues 69-137; sequence KERPEISPPS…KFYDSNTVKQ (69 aa). Positions 74–87 constitute a CRIB domain; it reads ISPPSDFEHTIHVG. Positions 88 to 248 are linker; the sequence is FDAVTGEFTG…IVSIGDPKKK (161 aa). Residue K128 is modified to N6-acetyllysine. T134 carries the phosphothreonine modification. Y139 bears the Phosphotyrosine mark. Position 141 is a phosphoserine (S141). Positions 142–190 are disordered; that stretch reads FTPPEKDGFPSGTPALNTKGSETSAVVTEEDDDDEDAAPPVIAPRPDHT. Residue T143 is modified to Phosphothreonine. Residue S152 is modified to Phosphoserine. T154, T159, and T169 each carry phosphothreonine. Over residues 155–167 the composition is skewed to polar residues; the sequence is PALNTKGSETSAV. Residues 169–178 are compositionally biased toward acidic residues; the sequence is TEEDDDDEDA. S197 is modified (phosphoserine). The segment at 204–228 is disordered; it reads APVGDSNVDSGAKSSDKQKKKAKMT. Positions 245–251 match the Nuclear localization signal motif; sequence PKKKYTR. One can recognise a Protein kinase domain in the interval 249 to 500; it reads YTRYEKIGQG…AKELLQHPFL (252 aa). Residues 255–263 and K278 contribute to the ATP site; that span reads IGQGASGTV. Catalysis depends on D368, which acts as the Proton acceptor. T402 bears the Phosphothreonine; by autocatalysis mark.

This sequence belongs to the protein kinase superfamily. STE Ser/Thr protein kinase family. STE20 subfamily. In terms of assembly, interacts tightly with GTP-bound but not GDP-bound CDC42/p21 and RAC1. Interacts with SH3MD4. Interacts with SCRIB. Interacts with ARHGEF7 and GIT1. PAK-2p34 interacts with ARHGAP10. Interacts with RAC1. Post-translationally, full-length PAK2 is autophosphorylated when activated by CDC42/p21. Following cleavage, both peptides, PAK-2p27 and PAK-2p34, become highly autophosphorylated. Autophosphorylation of PAK-2p27 can occur in the absence of any effectors and is dependent on phosphorylation of Thr-402, because PAK-2p27 is acting as an exogenous substrate. In terms of processing, during apoptosis proteolytically cleaved by caspase-3 or caspase-3-like proteases to yield active PAK-2p34. Ubiquitinated, leading to its proteasomal degradation.

The protein localises to the cytoplasm. It localises to the nucleus. The protein resides in the perinuclear region. Its subcellular location is the membrane. It carries out the reaction L-seryl-[protein] + ATP = O-phospho-L-seryl-[protein] + ADP + H(+). The enzyme catalyses L-threonyl-[protein] + ATP = O-phospho-L-threonyl-[protein] + ADP + H(+). Its activity is regulated as follows. Activated by binding small G proteins. Binding of GTP-bound CDC42 or RAC1 to the autoregulatory region releases monomers from the autoinhibited dimer, enables phosphorylation of Thr-402 and allows the kinase domain to adopt an active structure. Following caspase cleavage, autophosphorylated PAK-2p34 is constitutively active. In terms of biological role, serine/threonine protein kinase that plays a role in a variety of different signaling pathways including cytoskeleton regulation, cell motility, cell cycle progression, apoptosis or proliferation. Acts as a downstream effector of the small GTPases CDC42 and RAC1. Activation by the binding of active CDC42 and RAC1 results in a conformational change and a subsequent autophosphorylation on several serine and/or threonine residues. Full-length PAK2 stimulates cell survival and cell growth. Phosphorylates MAPK4 and MAPK6 and activates the downstream target MAPKAPK5, a regulator of F-actin polymerization and cell migration. Phosphorylates JUN and plays an important role in EGF-induced cell proliferation. Phosphorylates many other substrates including histone H4 to promote assembly of H3.3 and H4 into nucleosomes, BAD, ribosomal protein S6, or MBP. Phosphorylates CASP7, thereby preventing its activity. Additionally, associates with ARHGEF7 and GIT1 to perform kinase-independent functions such as spindle orientation control during mitosis. On the other hand, apoptotic stimuli such as DNA damage lead to caspase-mediated cleavage of PAK2, generating PAK-2p34, an active p34 fragment that translocates to the nucleus and promotes cellular apoptosis involving the JNK signaling pathway. Caspase-activated PAK2 phosphorylates MKNK1 and reduces cellular translation. The sequence is that of Serine/threonine-protein kinase PAK 2 (Pak2) from Rattus norvegicus (Rat).